The following is a 152-amino-acid chain: ASP external chaperone (152 aa).

Positions 1-22 are cleaved as a signal peptide; that stretch reads MNKPVTLLLATLLAPLSGQLCA.

Forms a complex with the serine protease ASP in the periplasm. After translocation of the ASP-ORF2 complex from the periplasm to the extracellular space, the complex is dissociated in a pH-dependent manner.

The protein resides in the periplasm. It is found in the secreted. Degraded by ASP after secretion and dissociation of the ASP-ORF2 complex. Required for the production of the active form of the Aeromonas extracellular serine protease (ASP). Acts as a chaperone that helps ASP form an active structure in the periplasm. Formation of a complex with ASP in the periplasm also inactivates the protease activity and likely protects ASP from intrinsic proteases. Dissociation of the ASP-ORF2 complex after secretion in the extracellular space generates an active ASP. This chain is ASP external chaperone, found in Aeromonas sobria.